A 122-amino-acid chain; its full sequence is UPF0145 protein TV0671 (122 aa).

This sequence belongs to the UPF0145 family.

The protein is UPF0145 protein TV0671 of Thermoplasma volcanium (strain ATCC 51530 / DSM 4299 / JCM 9571 / NBRC 15438 / GSS1).